We begin with the raw amino-acid sequence, 400 residues long: Acetate kinase (400 aa).

N10 provides a ligand contact to Mg(2+). Position 17 (K17) interacts with ATP. Residue R91 coordinates substrate. Catalysis depends on D150, which acts as the Proton donor/acceptor. ATP is bound by residues 210 to 214 (HLGNG), 285 to 287 (DCR), and 333 to 337 (GIGEN). E387 is a binding site for Mg(2+).

The protein belongs to the acetokinase family. As to quaternary structure, homodimer. Mg(2+) is required as a cofactor. It depends on Mn(2+) as a cofactor.

The protein resides in the cytoplasm. The catalysed reaction is acetate + ATP = acetyl phosphate + ADP. It functions in the pathway metabolic intermediate biosynthesis; acetyl-CoA biosynthesis; acetyl-CoA from acetate: step 1/2. In terms of biological role, catalyzes the formation of acetyl phosphate from acetate and ATP. Can also catalyze the reverse reaction. This Yersinia pseudotuberculosis serotype IB (strain PB1/+) protein is Acetate kinase.